Consider the following 607-residue polypeptide: Chaperone protein DnaK (607 aa).

Phosphothreonine; by autocatalysis is present on T174. Residues 571–607 are disordered; that stretch reads AAMYQKQAQQQQPGPGPDAGKDKDDKDKTVDADYEVK. Over residues 589-607 the composition is skewed to basic and acidic residues; that stretch reads AGKDKDDKDKTVDADYEVK.

The protein belongs to the heat shock protein 70 family.

Its function is as follows. Acts as a chaperone. The chain is Chaperone protein DnaK from Desulforudis audaxviator (strain MP104C).